The sequence spans 645 residues: Serine/threonine-protein kinase Nek11 (645 aa).

The Protein kinase domain maps to 29 to 287 (YVLQQKLGSG…AIEILKIPYL (259 aa)). Residues 35 to 43 (LGSGSFGTV) and K61 each bind ATP. D158 (proton acceptor) is an active-site residue. Position 273 is a phosphoserine; by CHEK1 (S273). Positions 346–385 (RLRKLQAADEKARKLKKIVEEKYEENSKRMQELRSRNFQQ) form a coiled coil. Residues 399–445 (GMEEKEEQPEGRLSCSPQDEDEERWQGREEESDEPTLENLPESQPIP) are disordered.

It belongs to the protein kinase superfamily. NEK Ser/Thr protein kinase family. NIMA subfamily. In terms of assembly, interacts with isoform 1 of NEK2. It depends on Mn(2+) as a cofactor. Requires Mg(2+) as cofactor. Post-translationally, phosphorylated by NEK2. Phosphorylation at Ser-273 is important for its activation. Poorly expressed in cerebellum, trachea, lung, appendix, and uterus.

It is found in the nucleus. Its subcellular location is the nucleolus. The enzyme catalyses L-seryl-[protein] + ATP = O-phospho-L-seryl-[protein] + ADP + H(+). It catalyses the reaction L-threonyl-[protein] + ATP = O-phospho-L-threonyl-[protein] + ADP + H(+). With respect to regulation, autorepressed by intramolecular binding of the C-terminus which dissociates following phosphorylation by NEK2 isoform 1 in G1/S-arrested cells. NEK2 isoform 2 is largely not present in the nucleolus, and does not appear to phosphorylate NEK11. Activated in response to DNA damage. Inhibited by zinc. Protein kinase which plays an important role in the G2/M checkpoint response to DNA damage. Controls degradation of CDC25A by directly phosphorylating it on residues whose phosphorylation is required for BTRC-mediated polyubiquitination and degradation. This chain is Serine/threonine-protein kinase Nek11, found in Homo sapiens (Human).